The primary structure comprises 711 residues: Early transcription factor 82 kDa subunit (711 aa).

The protein belongs to the poxviridae VETF large subunit family. As to quaternary structure, heterodimer of a 70 kDa and a 82 kDa subunit. Part of the early transcription complex composed of ETF, RAP94, and the DNA-directed RNA polymerase.

Functionally, acts with RNA polymerase to initiate transcription from early gene promoters. Is recruited by the RPO-associated protein of 94 kDa (RAP94) to form the early transcription complex, which also contains the core RNA polymerase. ETF heterodimer binds to early gene promoters. The protein is Early transcription factor 82 kDa subunit (VETFL) of Oryctolagus cuniculus (Rabbit).